Reading from the N-terminus, the 112-residue chain is High mobility group protein D (112 aa).

Positions 5–71 (PKRPLSAYML…DYDRAVKEFE (67 aa)) form a DNA-binding region, HMG box. S10 bears the Phosphoserine mark. A Phosphotyrosine modification is found at Y12. The disordered stretch occupies residues 72–112 (ANGGSSAANGGGAKKRAKPAKKVAKKSKKEESDEDDDDESE). The span at 84-98 (AKKRAKPAKKVAKKS) shows a compositional bias: basic residues. Residues S103 and S111 each carry the phosphoserine modification. Acidic residues predominate over residues 103-112 (SDEDDDDESE).

It belongs to the HMGB family.

It is found in the nucleus. It localises to the chromosome. Functionally, binds preferentially single-stranded DNA and unwinds double-stranded DNA. Prefers sites containing the sequence 5'-ttg-3'. Facilitates DNA bending. Associated with early embryonic chromatin in the absence of histone H1. In Drosophila melanogaster (Fruit fly), this protein is High mobility group protein D (HmgD).